The following is a 422-amino-acid chain: Lipoyl synthase, mitochondrial (422 aa).

The N-terminal 34 residues, 1 to 34 (MAASSTRLRCLYASSAPAWKKSPSQSIISLSRHY), are a transit peptide targeting the mitochondrion. Polar residues predominate over residues 37 to 48 (TSSTTPSLNPDE). The tract at residues 37-70 (TSSTTPSLNPDESSSSSSSTIPKRRKTTTFRDKL) is disordered. [4Fe-4S] cluster is bound by residues Cys146, Cys151, Cys157, Cys177, Cys181, Cys184, and Ser383. One can recognise a Radical SAM core domain in the interval 160–372 (GSDKSAATAT…RQRALEMGFL (213 aa)).

Belongs to the radical SAM superfamily. Lipoyl synthase family. It depends on [4Fe-4S] cluster as a cofactor.

Its subcellular location is the mitochondrion. The catalysed reaction is [[Fe-S] cluster scaffold protein carrying a second [4Fe-4S](2+) cluster] + N(6)-octanoyl-L-lysyl-[protein] + 2 oxidized [2Fe-2S]-[ferredoxin] + 2 S-adenosyl-L-methionine + 4 H(+) = [[Fe-S] cluster scaffold protein] + N(6)-[(R)-dihydrolipoyl]-L-lysyl-[protein] + 4 Fe(3+) + 2 hydrogen sulfide + 2 5'-deoxyadenosine + 2 L-methionine + 2 reduced [2Fe-2S]-[ferredoxin]. Its pathway is protein modification; protein lipoylation via endogenous pathway; protein N(6)-(lipoyl)lysine from octanoyl-[acyl-carrier-protein]: step 2/2. Functionally, catalyzes the radical-mediated insertion of two sulfur atoms into the C-6 and C-8 positions of the octanoyl moiety bound to the lipoyl domains of lipoate-dependent enzymes, thereby converting the octanoylated domains into lipoylated derivatives. The polypeptide is Lipoyl synthase, mitochondrial (Talaromyces stipitatus (strain ATCC 10500 / CBS 375.48 / QM 6759 / NRRL 1006) (Penicillium stipitatum)).